The primary structure comprises 98 residues: NADH-ubiquinone oxidoreductase chain 4L (98 aa).

The next 3 helical transmembrane spans lie at 1 to 21 (MPSI…GMLV), 29 to 49 (SLLC…LTAL), and 61 to 81 (IILL…LVMV).

Belongs to the complex I subunit 4L family. Core subunit of respiratory chain NADH dehydrogenase (Complex I) which is composed of 45 different subunits.

Its subcellular location is the mitochondrion inner membrane. It catalyses the reaction a ubiquinone + NADH + 5 H(+)(in) = a ubiquinol + NAD(+) + 4 H(+)(out). Its function is as follows. Core subunit of the mitochondrial membrane respiratory chain NADH dehydrogenase (Complex I) which catalyzes electron transfer from NADH through the respiratory chain, using ubiquinone as an electron acceptor. Part of the enzyme membrane arm which is embedded in the lipid bilayer and involved in proton translocation. The polypeptide is NADH-ubiquinone oxidoreductase chain 4L (MT-ND4L) (Oryctolagus cuniculus (Rabbit)).